A 526-amino-acid chain; its full sequence is Tyrosine-protein kinase transforming protein Src (526 aa).

A disordered region spans residues 1 to 52; that stretch reads MGSSKSKPKDPSQRRHSLEPPDSTHHGGFPASQTPDETAAPDAHRNPSRSFG. Residue glycine 2 is the site of N-myristoyl glycine; by host attachment. The span at 7-25 shows a compositional bias: basic and acidic residues; it reads KPKDPSQRRHSLEPPDSTH. 2 SH3 domains span residues 71 to 139 and 81 to 142; these read TSPQ…YVAP and GGVT…PSDS. In terms of domain architecture, SH2 spans 148–245; the sequence is WYFGKITRRE…GLCHRLANVC (98 aa). The 251-residue stretch at 267–517 folds into the Protein kinase domain; that stretch reads LRLEAKLGQG…TFKYLQAQLL (251 aa). ATP contacts are provided by residues 273–281 and lysine 295; that span reads LGQGCFGEV. Aspartate 386 serves as the catalytic Proton acceptor. Position 416 is a phosphotyrosine; by autocatalysis (tyrosine 416).

The protein belongs to the protein kinase superfamily. Tyr protein kinase family. SRC subfamily. As to quaternary structure, homodimer. The phosphorylated form is termed pp60v-src.

The enzyme catalyses L-tyrosyl-[protein] + ATP = O-phospho-L-tyrosyl-[protein] + ADP + H(+). Its function is as follows. This phosphoprotein, required for both the initiation and the maintenance of neoplastic transformation, is a protein kinase that catalyzes the phosphorylation of tyrosine residues in vitro. This Gallus gallus (Chicken) protein is Tyrosine-protein kinase transforming protein Src (V-SRC).